Here is a 165-residue protein sequence, read N- to C-terminus: Sporulation thiol-disulfide oxidoreductase A (165 aa).

An N-terminal signal peptide occupies residues 1–26; the sequence is MLTKRLLTIYIMLLGLIAWFPGAAQA. The 139-residue stretch at 27–165 folds into the Thioredoxin domain; sequence EEKQPAVPAV…AEQLKEWTEE (139 aa). A disulfide bridge links C65 with C68.

This sequence belongs to the thioredoxin family.

Its subcellular location is the spore outer membrane. In terms of biological role, thiol-disulfide oxidoreductase with a reductive function, involved in spore cortex synthesis. It could be involved either in breaking disulfide bonds in cortex components or in proteins that are important for cortex synthesis, or in thiol/disulfide bond interchange. The protein is Sporulation thiol-disulfide oxidoreductase A (stoA) of Bacillus subtilis (strain 168).